Reading from the N-terminus, the 307-residue chain is Auxin-induced protein PCNT115 (307 aa).

Y64 functions as the Proton donor in the catalytic mechanism. H136 provides a ligand contact to substrate. 215–225 contributes to the NADP(+) binding site; it reads SPLGRGFLSSG.

This sequence belongs to the aldo/keto reductase family. Aldo/keto reductase 2 subfamily.

This Nicotiana tabacum (Common tobacco) protein is Auxin-induced protein PCNT115.